The primary structure comprises 86 residues: Mu-theraphotoxin-Hhn1b 3 (86 aa).

The signal sequence occupies residues 1–21 (MKASMFLALTGLALLFVVCYA). The propeptide occupies 22–49 (SESEEKEFSNELLSSVLAVDDNSKGEER). 3 cysteine pairs are disulfide-bonded: Cys-51/Cys-66, Cys-58/Cys-73, and Cys-65/Cys-80. Position 84 is an isoleucine amide (Ile-84).

It belongs to the neurotoxin 10 (Hwtx-1) family. 22 (Htx-4) subfamily. As to quaternary structure, monomer. As to expression, expressed by the venom gland.

The protein localises to the secreted. Functionally, neurotoxin. Selectively blocks neuronal tetrodotoxin-sensitive voltage-gated sodium channels (Nav) with an IC(50) of 44.6 nM. Does not affect tetrodotoxin-resistant voltage-gated sodium channels or calcium channels. The sequence is that of Mu-theraphotoxin-Hhn1b 3 from Cyriopagopus hainanus (Chinese bird spider).